The sequence spans 167 residues: MRVEVGQIVNTHGIKGEIKVKSNSDFTDVRFQPGQVLTVVHNNNDLEYTVKSHRVHKGLHMLTFEGINNINDIEHLKGSSIYQERDHEDIVLEENEFYYSDIIGCTVFDDQETPIGRVINIFETGANDVWVIKGSKEYLIPYIADVVKEVDVENKKIIITPMEGLLD.

The PRC barrel domain occupies 94-165 (ENEFYYSDII…KIIITPMEGL (72 aa)).

Belongs to the RimM family. Binds ribosomal protein uS19.

Its subcellular location is the cytoplasm. Its function is as follows. An accessory protein needed during the final step in the assembly of 30S ribosomal subunit, possibly for assembly of the head region. Essential for efficient processing of 16S rRNA. May be needed both before and after RbfA during the maturation of 16S rRNA. It has affinity for free ribosomal 30S subunits but not for 70S ribosomes. This chain is Ribosome maturation factor RimM, found in Staphylococcus aureus (strain Mu3 / ATCC 700698).